Consider the following 647-residue polypeptide: CRE-binding bZIP protein SKO1 (647 aa).

Disordered regions lie at residues 1 to 119 (MSSE…GSKR), 135 to 204 (STTN…QMPG), 305 to 331 (TPTT…TSTK), and 353 to 429 (KENE…EEQE). The span at 51 to 85 (RNNSTSTITQHSQRSTHSLNSIPEENGNSTVTDNS) shows a compositional bias: polar residues. Ser-94 carries the phosphoserine modification. The residue at position 113 (Thr-113) is a Phosphothreonine. 2 stretches are compositionally biased toward low complexity: residues 138-194 (NPSQ…SGNG) and 305-329 (TPTT…PNTS). Polar residues-rich tracts occupy residues 357–368 (NLTTQIENNDQF) and 396–405 (RKNSAVTTAP). Residue Ser-399 is modified to Phosphoserine. In terms of domain architecture, bZIP spans 429–492 (ERKRKEFLER…PSSSSNSQFN (64 aa)). Residues 430 to 451 (RKRKEFLERNRVAASKFRKRKK) form a basic motif region. The interval 454–461 (IKKIENDL) is leucine-zipper. Ser-558 carries the post-translational modification Phosphoserine.

This sequence belongs to the bZIP family.

It is found in the nucleus. In terms of biological role, binds to the CRE motif 5'-TGACGTCA-3' and acts as a repressor of transcription of the SUC2 gene and most probably other genes. The polypeptide is CRE-binding bZIP protein SKO1 (SKO1) (Saccharomyces cerevisiae (strain ATCC 204508 / S288c) (Baker's yeast)).